A 275-amino-acid polypeptide reads, in one-letter code: Phosphonoacetaldehyde hydrolase (275 aa).

D15 (nucleophile) is an active-site residue. D15 and A17 together coordinate Mg(2+). Residue K56 is the Schiff-base intermediate with substrate of the active site. D189 provides a ligand contact to Mg(2+).

This sequence belongs to the HAD-like hydrolase superfamily. PhnX family. As to quaternary structure, homodimer. Mg(2+) serves as cofactor.

It carries out the reaction phosphonoacetaldehyde + H2O = acetaldehyde + phosphate + H(+). Its function is as follows. Involved in phosphonate degradation. The sequence is that of Phosphonoacetaldehyde hydrolase from Pseudomonas putida (strain W619).